A 375-amino-acid polypeptide reads, in one-letter code: MEEEFVVTPWEVRGRVDYEKLLKHFGAKPLTKDEVALLEKYAGEVHPLIRRGFFYAHRDFDFIMKWHGEGRPWALYTGRGPSGPVHIGHMVPWILLKWFSDKFGLEVYFQITDDEKFYDDPEMKLEEATNWAYENALDVIALGFSPERLHLIIDTKDIKPLYPIAVRVAKKLTWNTVKATFGFTDSTNIGLIFYPSLQIAVAFLPTELRREATPVLIPCAIDQDPYFRLARDIADALGYPKPSTLYSKFIMALTGESKMSASNPDSAIYTLDDEKTVRRKVMNAFTGGRPTAEEQRKYGGNPEVCPVFHYHMLFDPDDASVEKIRQDCKSGALLCGECKLKLHEKITKFLKEHRERREKARGKVDEYRLSVKLSK.

Residues 81 to 89 (PSGPVHIGH) carry the 'HIGH' region motif. The short motif at 258-262 (KMSAS) is the 'KMSKS' region element.

This sequence belongs to the class-I aminoacyl-tRNA synthetase family.

It is found in the cytoplasm. It catalyses the reaction tRNA(Trp) + L-tryptophan + ATP = L-tryptophyl-tRNA(Trp) + AMP + diphosphate + H(+). The chain is Tryptophan--tRNA ligase from Pyrobaculum aerophilum (strain ATCC 51768 / DSM 7523 / JCM 9630 / CIP 104966 / NBRC 100827 / IM2).